A 608-amino-acid polypeptide reads, in one-letter code: MWRLPGRAALRGVRSVVEQRSPAEATTHEAVRAMERAVVRCVPSEPKLSLSFALADGSHKNMQRDQSEPLGRALSRIATNALKGHAKVAAAKKSRKNRAHSSGGAACAATGSEPAATCEPVVKLYYREEAVAEDVLNVDAWQDGAVLQIGDVKYKVERNPPAFTELQLPRYIMAGFPVCPKLGLEFGDPASSVFRWYKEVKPGAAEPGDSGLASSSHSLQSSAWIETGVDERVYTPCNADIGLRLKLHCTPGNGQRFGPSRELESVCPVEAGPGTCTFDHRHLYTKKVTEDSFIRTVSYNILADTYAQTEFSRTVLYPYCAPYALELDYRQNLIQKELTGYNADLICLQEVDRAVFSDSLVPALEAFGLEGVFRIKQHEGLATFYRKSKFRLLSQHDISFQEALKSDPLHKELLEKLALNPLAQEKVLQRSSVLQISVLQSTTDSSKKICVANTHLYWHPKGGYIRLIQMAAALVHIRHVSCDLYPGIPVIFCGDFNSTPSTGMYHFVINGSVPEDHEDWASNGEEERCGMSLTHCFKLKSACGEPAYTNYVGGFHGCLDYIFIDLNALEVEQVIPLPSHEEVTTHQALPSVSHPSDHIALVCDLKWK.

The N-terminal 16 residues, 1–16 (MWRLPGRAALRGVRSV), are a transit peptide targeting the mitochondrion. The disordered stretch occupies residues 91–111 (AKKSRKNRAHSSGGAACAATG). Residues 100 to 111 (HSSGGAACAATG) are compositionally biased toward low complexity. Phosphoserine is present on S216. E350, D495, and N497 together coordinate Mg(2+). Catalysis depends on D495, which acts as the Proton donor/acceptor.

The protein belongs to the CCR4/nocturin family. The cofactor is Mg(2+).

The protein resides in the mitochondrion matrix. The catalysed reaction is Exonucleolytic cleavage of poly(A) to 5'-AMP.. In terms of biological role, enzyme that cleaves 2',5'-phosphodiester bond linking adenosines of the 5'-triphosphorylated oligoadenylates, triphosphorylated oligoadenylates referred as 2-5A modulates the 2-5A system. Degrades triphosphorylated 2-5A to produce AMP and ATP. Also cleaves 3',5'-phosphodiester bond of oligoadenylates. Plays a role as a negative regulator of the 2-5A system that is one of the major pathways for antiviral and antitumor functions induced by interferons (IFNs). Suppression of this enzyme increases cellular 2-5A levels and decreases viral replication in cultured small-airway epithelial cells. This is 2',5'-phosphodiesterase 12 (Pde12) from Rattus norvegicus (Rat).